The sequence spans 217 residues: MKTLRFPAGLYGITPEWDDTDRLLAAVRAAAAGGMTALQLRRKLADERLRAAQARALAPLCRELGVVFLVNDHWKLALDVGADGAHLGRDDADPATVRAQAGAGLLLGVSCYNDLRRADALLAAGADYVAFGTVFASPTKPEAVHAPLQTLTEARARVLACPAPRPAVVAIGGITPANVSQVAQAGADSAAVISGLFEAPDIQAAARACAAAFSVNP.

Residues 39 to 43 and asparagine 71 contribute to the 4-amino-2-methyl-5-(diphosphooxymethyl)pyrimidine site; that span reads QLRRK. The Mg(2+) site is built by aspartate 72 and aspartate 91. Serine 110 is a 4-amino-2-methyl-5-(diphosphooxymethyl)pyrimidine binding site. 137-139 lines the 2-[(2R,5Z)-2-carboxy-4-methylthiazol-5(2H)-ylidene]ethyl phosphate pocket; it reads SPT. Residue lysine 140 participates in 4-amino-2-methyl-5-(diphosphooxymethyl)pyrimidine binding. Residues glycine 173 and 193-194 contribute to the 2-[(2R,5Z)-2-carboxy-4-methylthiazol-5(2H)-ylidene]ethyl phosphate site; that span reads IS.

This sequence belongs to the thiamine-phosphate synthase family. Requires Mg(2+) as cofactor.

It carries out the reaction 2-[(2R,5Z)-2-carboxy-4-methylthiazol-5(2H)-ylidene]ethyl phosphate + 4-amino-2-methyl-5-(diphosphooxymethyl)pyrimidine + 2 H(+) = thiamine phosphate + CO2 + diphosphate. The enzyme catalyses 2-(2-carboxy-4-methylthiazol-5-yl)ethyl phosphate + 4-amino-2-methyl-5-(diphosphooxymethyl)pyrimidine + 2 H(+) = thiamine phosphate + CO2 + diphosphate. The catalysed reaction is 4-methyl-5-(2-phosphooxyethyl)-thiazole + 4-amino-2-methyl-5-(diphosphooxymethyl)pyrimidine + H(+) = thiamine phosphate + diphosphate. It functions in the pathway cofactor biosynthesis; thiamine diphosphate biosynthesis; thiamine phosphate from 4-amino-2-methyl-5-diphosphomethylpyrimidine and 4-methyl-5-(2-phosphoethyl)-thiazole: step 1/1. Condenses 4-methyl-5-(beta-hydroxyethyl)thiazole monophosphate (THZ-P) and 2-methyl-4-amino-5-hydroxymethyl pyrimidine pyrophosphate (HMP-PP) to form thiamine monophosphate (TMP). This chain is Thiamine-phosphate synthase, found in Bordetella parapertussis (strain 12822 / ATCC BAA-587 / NCTC 13253).